The chain runs to 660 residues: DNA primase (660 aa).

The CHC2-type zinc finger occupies 40-64 (CPFHKEKTPSFTVSPDKQFYYCFGC). The interval 94–115 (GMEVPREQGRRDQKPRQPTDSP) is disordered. A compositionally biased stretch (basic and acidic residues) spans 97–110 (VPREQGRRDQKPRQ). The Toprim domain maps to 261–343 (DEIIVVEGYM…GRRARFLFLP (83 aa)). Mg(2+) is bound by residues Glu267, Asp311, and Asp313. Disordered stretches follow at residues 425-449 (DPQQ…DPGY) and 476-519 (QAWK…APVE). Polar residues predominate over residues 428–442 (QVEQLAQQAPATSSM). The span at 488 to 498 (PWSDKPWDKNR) shows a compositional bias: basic and acidic residues.

It belongs to the DnaG primase family. As to quaternary structure, monomer. Interacts with DnaB. It depends on Zn(2+) as a cofactor. Mg(2+) is required as a cofactor.

It carries out the reaction ssDNA + n NTP = ssDNA/pppN(pN)n-1 hybrid + (n-1) diphosphate.. Functionally, RNA polymerase that catalyzes the synthesis of short RNA molecules used as primers for DNA polymerase during DNA replication. This chain is DNA primase, found in Pseudomonas putida (strain ATCC 47054 / DSM 6125 / CFBP 8728 / NCIMB 11950 / KT2440).